Here is a 643-residue protein sequence, read N- to C-terminus: Leukocyte immunoglobulin-like receptor subfamily B member 5 (643 aa).

The N-terminal stretch at 1–23 is a signal peptide; sequence MTLTLSVLICLGLNVGPRTCVQA. The Extracellular portion of the chain corresponds to 24–458; sequence GTLPKPTLWA…PQSGLGRHLG (435 aa). 4 consecutive Ig-like C2-type domains span residues 27-116, 111-228, 224-313, and 337-418; these read PKPT…LELV, DPLE…SLLI, PSLL…DPLD, and GENV…LVVS. Cysteines 49 and 98 form a disulfide. N-linked (GlcNAc...) asparagine glycosylation is present at N139. Disulfide bonds link C144–C195 and C244–C295. N-linked (GlcNAc...) asparagine glycosylation is found at N279 and N339. A disulfide bridge links C344 with C395. The span at 417 to 433 shows a compositional bias: low complexity; sequence VSGPSGDPSLSPTGSTP. A disordered region spans residues 417-449; that stretch reads VSGPSGDPSLSPTGSTPTPGPEDQPLTPTGLDP. A helical transmembrane segment spans residues 459 to 479; it reads VVTGVSVAFVLLLFLLLFLLL. The Cytoplasmic segment spans residues 480-643; that stretch reads RHRHQSKHRT…PSIYAPLAIH (164 aa). The disordered stretch occupies residues 493 to 643; it reads FYRPAGAAGP…PSIYAPLAIH (151 aa). A Phosphoserine modification is found at S514. Basic and acidic residues-rich tracts occupy residues 531 to 549, 557 to 567, and 579 to 592; these read TQPK…RDED, EVKHSRPRREM, and LDTK…DRQM. Residues 605 to 610 carry the ITIM motif 1 motif; it reads VTYAQL. The segment covering 615-631 has biased composition (basic and acidic residues); the sequence is LRREATEPPPSQEREPP. The ITIM motif 2 signature appears at 635–640; that stretch reads SIYAPL.

Its subcellular location is the membrane. Functionally, may act as receptor for class I MHC antigens. This chain is Leukocyte immunoglobulin-like receptor subfamily B member 5 (LILRB5), found in Pan troglodytes (Chimpanzee).